Consider the following 317-residue polypeptide: Mitochondrial thiamine pyrophosphate carrier 1 (317 aa).

6 helical membrane passes run 21–41 (AVSGLHAVVAGSVSGLVARSV), 86–106 (VPASAMYVLYGSLQFGTYAWL), 122–142 (LAVGALAGLVSSLLTYPLDLL), 176–196 (GGAWAIAATTLTTGLIFGIYE), 207–227 (LPWLAAAASPTAGLVSKAAVF), and 281–300 (GLTMALCKSTPTTVITLWVY). Solcar repeat units lie at residues 22-109 (VSGL…LNTA), 116-201 (PPQA…CTIA), and 206-306 (GLPW…CLRL).

It belongs to the mitochondrial carrier (TC 2.A.29) family.

It localises to the mitochondrion inner membrane. Its function is as follows. Mitochondrial transporter that mediates uptake of thiamine pyrophosphate (ThPP) into mitochondria. The sequence is that of Mitochondrial thiamine pyrophosphate carrier 1 (TPC1) from Eremothecium gossypii (strain ATCC 10895 / CBS 109.51 / FGSC 9923 / NRRL Y-1056) (Yeast).